The sequence spans 180 residues: YY1-associated factor 2 (180 aa).

3 disordered regions span residues 1 to 24 (MGDK…GYWD), 47 to 120 (GTST…EVTV), and 132 to 180 (EKTK…GESH). The RanBP2-type zinc finger occupies 19–48 (DEGYWDCSVCTFRNSAEAFKCMMCDVRKGT). The segment covering 62 to 73 (QQVTQQFVPPTQ) has biased composition (low complexity). A compositionally biased stretch (basic and acidic residues) spans 74 to 93 (SKKEKKDKVEKEKSEKETTS). Residues 95–105 (KNSHKKTRPRL) show a composition bias toward basic residues. Composition is skewed to low complexity over residues 136 to 156 (SPPA…SSSD) and 163 to 174 (SRSSSPRGEASS). A Phosphoserine modification is found at Ser167.

As to quaternary structure, interacts with MYC, MYCN, RNF2/RING1B and YY1. Part of the E2F6.com-1 complex in G0 phase composed of E2F6, MGA, MAX, TFDP1, CBX3, BAT8, EUHMTASE1, RING1, RNF2, MBLR, L3MBTL2 and YAF2.

The protein resides in the nucleus. Its function is as follows. Binds to MYC and inhibits MYC-mediated transactivation. Also binds to MYCN and enhances MYCN-dependent transcriptional activation. Increases calpain 2-mediated proteolysis of YY1 in vitro. Component of the E2F6.com-1 complex, a repressive complex that methylates 'Lys-9' of histone H3, suggesting that it is involved in chromatin-remodeling. This Homo sapiens (Human) protein is YY1-associated factor 2 (YAF2).